Reading from the N-terminus, the 187-residue chain is NADH-quinone oxidoreductase subunit C 2 (187 aa).

The segment at 153-187 (YKDKLNPFGAEGPPPTQPDLATRDIPQGRPSTPES) is disordered.

This sequence belongs to the complex I 30 kDa subunit family. As to quaternary structure, NDH-1 is composed of 14 different subunits. Subunits NuoB, C, D, E, F, and G constitute the peripheral sector of the complex.

The protein localises to the cell inner membrane. It catalyses the reaction a quinone + NADH + 5 H(+)(in) = a quinol + NAD(+) + 4 H(+)(out). Its function is as follows. NDH-1 shuttles electrons from NADH, via FMN and iron-sulfur (Fe-S) centers, to quinones in the respiratory chain. The immediate electron acceptor for the enzyme in this species is believed to be ubiquinone. Couples the redox reaction to proton translocation (for every two electrons transferred, four hydrogen ions are translocated across the cytoplasmic membrane), and thus conserves the redox energy in a proton gradient. The polypeptide is NADH-quinone oxidoreductase subunit C 2 (Rhizobium etli (strain CIAT 652)).